The primary structure comprises 330 residues: HTH-type transcriptional regulator GanR (330 aa).

The HTH lacI-type domain occupies 2-57; the sequence is ATIKDIAQEAGFSISTVSRVLNNDESLSVPDETREKIYEAAEKLNYRKKTVRPLVK. Positions 4–23 form a DNA-binding region, H-T-H motif; the sequence is IKDIAQEAGFSISTVSRVLN.

In terms of biological role, negatively regulates the expression of the ganSPQAB operon. Inhibits transcription of the operon by binding to an operator in the promoter region. In the presence of galactobiose, GanR dissociates from the promoter, resulting in the expression of the gan operon. The chain is HTH-type transcriptional regulator GanR from Bacillus subtilis (strain 168).